The primary structure comprises 498 residues: XK-related protein 4 (498 aa).

The segment at 24-46 (SEHSGSVQGLHPGAQPDSAGAGD) is disordered. The next 2 membrane-spanning stretches (helical) occupy residues 81–101 (CLWIVAAVAVYVADVGSDVWL) and 111–131 (YWWFGLTLFFVVLGSFSVQLF). The tract at residues 166–203 (SHGDVTAQHHPATPQRQASTASRNTTTNSTASTGLGPR) is disordered. Residues 183 to 198 (ASTASRNTTTNSTAST) are compositionally biased toward low complexity. Transmembrane regions (helical) follow at residues 302-322 (LFIYYLLILAENAALSALWYL) and 332-352 (FAVPALCVIFSSFLTGVVFML).

This sequence belongs to the XK family.

It localises to the cell membrane. It catalyses the reaction a 1,2-diacyl-sn-glycero-3-phospho-L-serine(in) = a 1,2-diacyl-sn-glycero-3-phospho-L-serine(out). Functionally, phospholipid scramblase that promotes phosphatidylserine exposure on apoptotic cell surface. Phosphatidylserine is a specific marker only present at the surface of apoptotic cells and acts as a specific signal for engulfment. The polypeptide is XK-related protein 4 (Tetraodon nigroviridis (Spotted green pufferfish)).